Here is a 475-residue protein sequence, read N- to C-terminus: Cytochrome P450 monooxygenase sthD (475 aa).

A signal peptide spans 1 to 17 (MAAYFLLGLYGSTLVYR). Residues 276–296 (FIIIAGSDTVAATLTFAFFYL) form a helical membrane-spanning segment. A glycan (N-linked (GlcNAc...) asparagine) is linked at asparagine 336. Cysteine 418 contacts heme.

The protein belongs to the cytochrome P450 family. The cofactor is heme.

It is found in the membrane. The enzyme catalyses betaenone A + NADPH + O2 + H(+) = stemphyloxin II + NADP(+) + H2O. It catalyses the reaction betaenone C + NADPH + O2 + H(+) = stemphyloxin I + NADP(+) + H2O. Its pathway is mycotoxin biosynthesis. Cytochrome P450 monooxygenase; part of the gene cluster that mediates the biosynthesis of the phytotoxin stemphyloxin II. The first step of the pathway is the synthesis of dehydroprobetaenone I by the polyketide synthase sthA and the enoyl reductase sthE via condensation of one acetyl-CoA starter unit with 7 malonyl-CoA units and 5 methylations. The C-terminal reductase (R) domain of sthA catalyzes the reductive release of the polyketide chain. Because sthA lacks a designated enoylreductase (ER) domain, the required activity is provided the enoyl reductase sthE. The short-chain dehydrogenase/reductase sthC then catalyzes reduction of dehydroprobetaenone I to probetaenone I. The cytochrome P450 monooxygenase sthF catalyzes successive epoxidation, oxidation (resulting from epoxide opening) and hydroxylation to install a tertiary alcohol in the decaline ring to yield betaenone C from dehydroprobetaenone I and betaenone B from probetaenone I. The FAD-linked oxidoreductase sthB is responsible for the conversion of betaenone C to betaenone A via an intramolecular aldol reaction between C-1 and C-17 to form the bridged tricyclic system in betaenone A. Finally, the cytochrome P450 monooxygenase sthD catalyzes the hydroxylation of C-15 to afford the final metabolite stemphyloxin II. In Phaeosphaeria nodorum (strain SN15 / ATCC MYA-4574 / FGSC 10173) (Glume blotch fungus), this protein is Cytochrome P450 monooxygenase sthD.